The chain runs to 157 residues: Protein UXT (157 aa).

This sequence belongs to the UXT family. As to quaternary structure, homohexamer. Component of the PAQosome complex which is responsible for the biogenesis of several protein complexes and which consists of R2TP complex members RUVBL1, RUVBL2, RPAP3 and PIH1D1, URI complex members PFDN2, PFDN6, PDRG1, UXT and URI1 as well as ASDURF, POLR2E and DNAAF10/WDR92. Interacts with LRPPRC. Interacts with androgen receptor AR (via N-terminus). Interacts with estrogen receptor ESR1; the interaction relocalizes ESR1 from the nucleus to the cytoplasm. In the nucleus, interacts specifically with RELA (via RHD domain) and forms a dynamic complex with NF-kappa-B and is recruited to the NF-kappa-B enhanceosome upon stimulation. Interacts with MECOM. Interacts with URI1. In terms of assembly, part of complex I composed of TNF-alpha receptor TNFRSF1A, TRADD, TRAF2 and RIPK1 formed in response to TNF-alpha stimulation. Within the complex, interacts (via TPQE motif) with TRAF2; the interaction prevents the recruitment of FADD and CASP8/caspase 8 to complex I. In terms of processing, ubiquitinated by E3 ubiquitin-protein ligase complex containing FBXO7; leading to proteasomal degradation. Ubiquitous. Expressed in prostate epithelial cells. Expressed in mammary epithelial cells. Highest levels in the heart, skeletal muscle, pancreas, kidney, liver, adrenal gland, peripheral blood leukocytes, lymph node, prostate, and thyroid and the lowest levels in bladder and uterus. Overexpressed in a number of tumor tissues.

The protein resides in the cytoplasm. It localises to the nucleus. The protein localises to the cytoskeleton. It is found in the microtubule organizing center. Its subcellular location is the centrosome. The protein resides in the spindle pole. Involved in gene transcription regulation. Acts in concert with the corepressor URI1 to regulate androgen receptor AR-mediated transcription. Together with URI1, associates with chromatin to the NKX3-1 promoter region. Negatively regulates the transcriptional activity of the estrogen receptor ESR1 by inducing its translocation into the cytoplasm. May act as nuclear chaperone that facilitates the formation of the NF-kappa-B enhanceosome and thus positively regulates NF-kappa-B transcription activity. Potential component of mitochondrial-associated LRPPRC, a multidomain organizer that potentially integrates mitochondria and the microtubular cytoskeleton with chromosome remodeling. Increasing concentrations of UXT contributes to progressive aggregation of mitochondria and cell death potentially through its association with LRPPRC. Suppresses cell transformation and it might mediate this function by interaction and inhibition of the biological activity of cell proliferation and survival stimulatory factors like MECOM. Its function is as follows. Plays a role in protecting cells against TNF-alpha-induced apoptosis by preventing the recruitment of FADD and caspase 8 to the apoptotic complex I, composed of TRADD, TRAF2 and RIPK1/RIP. The sequence is that of Protein UXT (UXT) from Homo sapiens (Human).